Here is a 215-residue protein sequence, read N- to C-terminus: LexA repressor (215 aa).

The H-T-H motif DNA-binding region spans 28–48 (RAEIAAELGFSSPNAAEEHLR). Catalysis depends on for autocatalytic cleavage activity residues S133 and K170.

This sequence belongs to the peptidase S24 family. As to quaternary structure, homodimer.

The catalysed reaction is Hydrolysis of Ala-|-Gly bond in repressor LexA.. Represses a number of genes involved in the response to DNA damage (SOS response), including recA and lexA. In the presence of single-stranded DNA, RecA interacts with LexA causing an autocatalytic cleavage which disrupts the DNA-binding part of LexA, leading to derepression of the SOS regulon and eventually DNA repair. The chain is LexA repressor from Burkholderia cenocepacia (strain ATCC BAA-245 / DSM 16553 / LMG 16656 / NCTC 13227 / J2315 / CF5610) (Burkholderia cepacia (strain J2315)).